A 177-amino-acid polypeptide reads, in one-letter code: RNA polymerase sigma-E factor (177 aa).

Positions Asp-34–Trp-47 match the Polymerase core binding motif. Residues Thr-128 to His-147 constitute a DNA-binding region (H-T-H motif).

Belongs to the sigma-70 factor family. ECF subfamily.

It localises to the cytoplasm. Its function is as follows. Sigma factors are initiation factors that promote the attachment of RNA polymerase to specific initiation sites and are then released. This sigma factor is required for normal cell wall integrity; it is recruited by RNA polymerase to transcribe genes with cell wall-related functions. It is also involved in the transcription of the dagA gene coding for an extracellular agar-degrading enzyme. The chain is RNA polymerase sigma-E factor (sigE) from Streptomyces coelicolor (strain ATCC BAA-471 / A3(2) / M145).